A 589-amino-acid polypeptide reads, in one-letter code: MPLFLEEHAEYLKRYLEQALEPISDADASVLSDYAMALLRHDSSEEEVRQLCYSQLEDFLRQETIPFVDKIFDVLREKSYLEGASNMPSTGMVTEEVSRYSPTSSMIPATNSMETNFNNSLPAVGKTNTFPSQVPNMFGPPLYHPAATAPSEFMPSIPGFGNLPNPAMPPIPFLPFNPAAQPPFPPPFKMRGKRGFGMRHEHNSELRRHSPGNRRFNPYKAYPQPHLGHRFSRNAGNDPTSTALEVRNIPEEHFNEENIRSFFSKFGVLEKVELNPTHHSCVLEFTSHEAANNAWSSPEPIFNNRFIKIFWYNPSKGFHNRPKKFASHKSPTTSDSSNVESSEDVDPASLLQNEEFHKLIEERQRQHEERLKRINANKKALEELNQKKRELAQQQLKEQELLMQKIKETDRSGNKRLMLLETQHSLLKAEADCLGLPVSNVSESPAASNGSHHPYASGLPQRGTNTFFRGRGRGRGDMFASMSIDNRPTKLRVINVSPEKNEALLQYLFTVGGYEEITEPSTTERLISFQNRNSAEKFFGGVRNVEKLQELELAWVPKTAVTTNTTSMETGESNTSDNMNIEVEEGRWR.

In terms of domain architecture, RRM spans threonine 242 to proline 314. 3 disordered regions span residues proline 322–alanine 348, glutamate 443–asparagine 465, and threonine 566–arginine 589. Residue serine 330 is modified to Phosphoserine. Residues serine 330 to glutamate 340 show a composition bias toward low complexity. Threonine 332 bears the Phosphothreonine mark. Serine 334 carries the post-translational modification Phosphoserine. Positions threonine 566–methionine 579 are enriched in polar residues.

Its subcellular location is the nucleus. This is an uncharacterized protein from Schizosaccharomyces pombe (strain 972 / ATCC 24843) (Fission yeast).